The chain runs to 492 residues: Catalase isozyme 2 (492 aa).

Active-site residues include H65 and N138. Y348 contributes to the heme binding site.

The protein belongs to the catalase family. As to quaternary structure, homotetramer. It depends on heme as a cofactor.

The protein localises to the peroxisome. The catalysed reaction is 2 H2O2 = O2 + 2 H2O. Functionally, occurs in almost all aerobically respiring organisms and serves to protect cells from the toxic effects of hydrogen peroxide. This chain is Catalase isozyme 2 (CAT2), found in Gossypium hirsutum (Upland cotton).